The chain runs to 1829 residues: DNA polymerase (1829 aa).

DOD-type homing endonuclease domains lie at 527-668 (LSGI…SLGI) and 1136-1269 (FLGY…SLGV).

It belongs to the DNA polymerase type-B family. In terms of processing, this protein undergoes a protein self splicing that involves a post-translational excision of the three intervening regions (inteins) followed by peptide ligation.

The enzyme catalyses DNA(n) + a 2'-deoxyribonucleoside 5'-triphosphate = DNA(n+1) + diphosphate. The polypeptide is DNA polymerase (pol) (Thermococcus aggregans).